The chain runs to 159 residues: MSYSITSPSQFVFLSSVWADPIELLNVCTNSLGNQFQTQQARTTVQQQFSEVWKPFPQSTVRFPGDVYKVYRYNAVLDPLITALLGSFDTRNRIIEVENQQSPTTAETLDATRRVDDATVAIRSAINNLVNELVRGTGLYNQNTFESMSGLVWTSAPAS.

S2 is modified (N-acetylserine; by host).

It belongs to the virgaviridae capsid protein family.

The protein resides in the virion. In terms of biological role, capsid protein self-assembles to form rod-shaped virions about 18 nm in diameter with a central canal enclosing the viral genomic RNA. This chain is Capsid protein (CP), found in Tomato mosaic virus (strain S-1) (ToMV).